A 294-amino-acid chain; its full sequence is UDP-3-O-acyl-N-acetylglucosamine deacetylase (294 aa).

Residues His-75, His-232, and Asp-236 each contribute to the Zn(2+) site. His-259 (proton donor) is an active-site residue.

It belongs to the LpxC family. The cofactor is Zn(2+).

It carries out the reaction a UDP-3-O-[(3R)-3-hydroxyacyl]-N-acetyl-alpha-D-glucosamine + H2O = a UDP-3-O-[(3R)-3-hydroxyacyl]-alpha-D-glucosamine + acetate. The protein operates within glycolipid biosynthesis; lipid IV(A) biosynthesis; lipid IV(A) from (3R)-3-hydroxytetradecanoyl-[acyl-carrier-protein] and UDP-N-acetyl-alpha-D-glucosamine: step 2/6. Catalyzes the hydrolysis of UDP-3-O-myristoyl-N-acetylglucosamine to form UDP-3-O-myristoylglucosamine and acetate, the committed step in lipid A biosynthesis. The polypeptide is UDP-3-O-acyl-N-acetylglucosamine deacetylase (Sulfurimonas denitrificans (strain ATCC 33889 / DSM 1251) (Thiomicrospira denitrificans (strain ATCC 33889 / DSM 1251))).